Here is a 211-residue protein sequence, read N- to C-terminus: Imidazole glycerol phosphate synthase subunit HisH (211 aa).

Residues 3 to 211 (VVAVIDYEMG…VSQVREKIAA (209 aa)) form the Glutamine amidotransferase type-1 domain. The active-site Nucleophile is Cys-81. Catalysis depends on residues His-186 and Glu-188.

In terms of assembly, heterodimer of HisH and HisF.

It is found in the cytoplasm. It carries out the reaction 5-[(5-phospho-1-deoxy-D-ribulos-1-ylimino)methylamino]-1-(5-phospho-beta-D-ribosyl)imidazole-4-carboxamide + L-glutamine = D-erythro-1-(imidazol-4-yl)glycerol 3-phosphate + 5-amino-1-(5-phospho-beta-D-ribosyl)imidazole-4-carboxamide + L-glutamate + H(+). The enzyme catalyses L-glutamine + H2O = L-glutamate + NH4(+). It participates in amino-acid biosynthesis; L-histidine biosynthesis; L-histidine from 5-phospho-alpha-D-ribose 1-diphosphate: step 5/9. IGPS catalyzes the conversion of PRFAR and glutamine to IGP, AICAR and glutamate. The HisH subunit catalyzes the hydrolysis of glutamine to glutamate and ammonia as part of the synthesis of IGP and AICAR. The resulting ammonia molecule is channeled to the active site of HisF. This Trichormus variabilis (strain ATCC 29413 / PCC 7937) (Anabaena variabilis) protein is Imidazole glycerol phosphate synthase subunit HisH.